The sequence spans 199 residues: Desiccation stress protein DSP-22, chloroplastic (199 aa).

Residues 1 to 52 (MASSTCYATIPAMSCRGQSTITRFGPNNLFLGKQSYELPLMRRNAKFTVRSM) constitute a chloroplast transit peptide. A compositionally biased stretch (basic and acidic residues) spans 53-62 (REDNEKEEQQ). Residues 53-82 (REDNEKEEQQQQKQQQTHDGGPDLTPNRTE) form a disordered region. 2 helical membrane-spanning segments follow: residues 130–152 (FNGG…LIPI) and 172–191 (IWNG…TEYV).

It belongs to the ELIP/psbS family. In terms of tissue distribution, preferentially localized in the chloroplast-rich palisade parenchyma cells, in extracts of desiccated leaves, in seeds, but not in roots or untreated leaves.

The protein resides in the plastid. It is found in the chloroplast thylakoid membrane. Possibly exerts a protective role during water loss. The sequence is that of Desiccation stress protein DSP-22, chloroplastic (DSP-22) from Craterostigma plantagineum (Blue gem).